Reading from the N-terminus, the 62-residue chain is DNA-directed RNA polymerase subunit Rpo10 (62 aa).

Zn(2+) is bound by residues C6, C9, C43, and C44.

It belongs to the archaeal Rpo10/eukaryotic RPB10 RNA polymerase subunit family. Part of the RNA polymerase complex. The cofactor is Zn(2+).

The protein resides in the cytoplasm. It carries out the reaction RNA(n) + a ribonucleoside 5'-triphosphate = RNA(n+1) + diphosphate. Its function is as follows. DNA-dependent RNA polymerase (RNAP) catalyzes the transcription of DNA into RNA using the four ribonucleoside triphosphates as substrates. The protein is DNA-directed RNA polymerase subunit Rpo10 of Methanosarcina barkeri (strain Fusaro / DSM 804).